The chain runs to 116 residues: MKEKLIELVEKEYLRSDIPQFKAGDTIGVYYKVKEGNKERVQLFEGVVIRVNGGGVAKTFTVRKVTAGIGVERIIPVNSPNIDRIEVLKVGRVRRSKLYYLRGLSAKKARIKEIVK.

Belongs to the bacterial ribosomal protein bL19 family.

Its function is as follows. This protein is located at the 30S-50S ribosomal subunit interface and may play a role in the structure and function of the aminoacyl-tRNA binding site. The polypeptide is Large ribosomal subunit protein bL19 (Fusobacterium nucleatum subsp. nucleatum (strain ATCC 25586 / DSM 15643 / BCRC 10681 / CIP 101130 / JCM 8532 / KCTC 2640 / LMG 13131 / VPI 4355)).